The primary structure comprises 579 residues: uncharacterized protein (579 aa).

One can recognise a GGDEF domain in the interval 449 to 577 (QKGVFILVDI…GKNRLMIHDS (129 aa)).

This is an uncharacterized protein from Bacillus subtilis (strain 168).